Here is a 361-residue protein sequence, read N- to C-terminus: Membrane-bound lytic murein transglycosylase B (361 aa).

The first 18 residues, 1–18 (MFKRRYVTLLPLFVLLAA), serve as a signal peptide directing secretion. A lipid anchor (N-palmitoyl cysteine) is attached at Cys-19. The S-diacylglycerol cysteine moiety is linked to residue Cys-19. Glu-162 is a catalytic residue.

As to quaternary structure, monomer.

The protein resides in the cell outer membrane. It catalyses the reaction Exolytic cleavage of the (1-&gt;4)-beta-glycosidic linkage between N-acetylmuramic acid (MurNAc) and N-acetylglucosamine (GlcNAc) residues in peptidoglycan, from either the reducing or the non-reducing ends of the peptidoglycan chains, with concomitant formation of a 1,6-anhydrobond in the MurNAc residue.. Functionally, murein-degrading enzyme. Catalyzes the cleavage of the glycosidic bonds between N-acetylmuramic acid and N-acetylglucosamine residues in peptidoglycan. May play a role in recycling of muropeptides during cell elongation and/or cell division. This Escherichia coli (strain K12) protein is Membrane-bound lytic murein transglycosylase B (mltB).